Reading from the N-terminus, the 340-residue chain is Fructose-1,6-bisphosphatase class 1 (340 aa).

Positions 107, 126, 128, and 129 each coordinate Mg(2+). Residue asparagine 215 coordinates substrate. Glutamate 287 is a Mg(2+) binding site.

It belongs to the FBPase class 1 family. In terms of assembly, homotetramer. It depends on Mg(2+) as a cofactor.

The protein localises to the cytoplasm. It carries out the reaction beta-D-fructose 1,6-bisphosphate + H2O = beta-D-fructose 6-phosphate + phosphate. It functions in the pathway carbohydrate biosynthesis; gluconeogenesis. In Brucella suis (strain ATCC 23445 / NCTC 10510), this protein is Fructose-1,6-bisphosphatase class 1.